Here is a 504-residue protein sequence, read N- to C-terminus: Arabinose import ATP-binding protein AraG (504 aa).

ABC transporter domains follow at residues 8-243 (LSFR…MVGR) and 256-499 (YGEE…MPKV). Position 40–47 (40–47 (GENGAGKS)) interacts with ATP.

The protein belongs to the ABC transporter superfamily. Arabinose importer (TC 3.A.1.2.2) family. In terms of assembly, the complex is composed of two ATP-binding proteins (AraG), two transmembrane proteins (AraH) and a solute-binding protein (AraF).

It is found in the cell inner membrane. The enzyme catalyses L-arabinose(out) + ATP + H2O = L-arabinose(in) + ADP + phosphate + H(+). Part of the ABC transporter complex AraFGH involved in arabinose import. Responsible for energy coupling to the transport system. This is Arabinose import ATP-binding protein AraG from Shigella flexneri.